Consider the following 129-residue polypeptide: M-zodatoxin-Lt8e (129 aa).

The N-terminal stretch at 1-20 (MKYFVVALALVAAFVCIAES) is a signal peptide. Positions 21–60 (KPAESEHELAEVEEENELADLEDAVWLEHLADLSDLEEAR) are excised as a propeptide. The Processing quadruplet motif signature appears at 57-60 (EEAR).

Cleavage of the propeptide depends on the processing quadruplet motif (XXXR, with at least one of X being E). Expressed by the venom gland.

It is found in the secreted. Functionally, insecticidal, cytolytic and antimicrobial peptide. Forms voltage-dependent, ion-permeable channels in membranes. At high concentration causes cell membrane lysis. The sequence is that of M-zodatoxin-Lt8e (cit 1-5) from Lachesana tarabaevi (Spider).